The primary structure comprises 2443 residues: Spatacsin (2443 aa).

A Phosphoserine modification is found at Ser-1955.

In terms of assembly, interacts with AP5Z1, AP5B1, AP5S1 and ZFYVE26. As to expression, expressed in all structures of brain, with a high expression in cerebellum. Expressed in cortical projection neurons.

It is found in the cytoplasm. The protein resides in the cytosol. Its subcellular location is the nucleus. It localises to the cell projection. The protein localises to the axon. It is found in the dendrite. Functionally, may play a role in neurite plasticity by maintaining cytoskeleton stability and regulating synaptic vesicle transport. The sequence is that of Spatacsin (SPG11) from Homo sapiens (Human).